Reading from the N-terminus, the 129-residue chain is Glycine cleavage system H protein (129 aa).

The 83-residue stretch at Ile24–Arg106 folds into the Lipoyl-binding domain. Lys65 bears the N6-lipoyllysine mark.

Belongs to the GcvH family. In terms of assembly, the glycine cleavage system is composed of four proteins: P, T, L and H. It depends on (R)-lipoate as a cofactor.

Its function is as follows. The glycine cleavage system catalyzes the degradation of glycine. The H protein shuttles the methylamine group of glycine from the P protein to the T protein. The sequence is that of Glycine cleavage system H protein from Synechococcus sp. (strain JA-2-3B'a(2-13)) (Cyanobacteria bacterium Yellowstone B-Prime).